Reading from the N-terminus, the 338-residue chain is Ketol-acid reductoisomerase (NADP(+)) (338 aa).

A KARI N-terminal Rossmann domain is found at Thr-2 to Thr-182. Residues Tyr-25–Gln-28, Ser-51, Ser-53, and Asp-83–Gln-86 each bind NADP(+). The active site involves His-108. NADP(+) is bound at residue Gly-134. The KARI C-terminal knotted domain maps to Thr-183–Asn-330. Mg(2+) contacts are provided by Asp-191, Glu-195, Glu-227, and Glu-231. Residue Ser-252 participates in substrate binding.

Belongs to the ketol-acid reductoisomerase family. Requires Mg(2+) as cofactor.

The catalysed reaction is (2R)-2,3-dihydroxy-3-methylbutanoate + NADP(+) = (2S)-2-acetolactate + NADPH + H(+). It carries out the reaction (2R,3R)-2,3-dihydroxy-3-methylpentanoate + NADP(+) = (S)-2-ethyl-2-hydroxy-3-oxobutanoate + NADPH + H(+). The protein operates within amino-acid biosynthesis; L-isoleucine biosynthesis; L-isoleucine from 2-oxobutanoate: step 2/4. It participates in amino-acid biosynthesis; L-valine biosynthesis; L-valine from pyruvate: step 2/4. Its function is as follows. Involved in the biosynthesis of branched-chain amino acids (BCAA). Catalyzes an alkyl-migration followed by a ketol-acid reduction of (S)-2-acetolactate (S2AL) to yield (R)-2,3-dihydroxy-isovalerate. In the isomerase reaction, S2AL is rearranged via a Mg-dependent methyl migration to produce 3-hydroxy-3-methyl-2-ketobutyrate (HMKB). In the reductase reaction, this 2-ketoacid undergoes a metal-dependent reduction by NADPH to yield (R)-2,3-dihydroxy-isovalerate. The polypeptide is Ketol-acid reductoisomerase (NADP(+)) (Clostridium botulinum (strain Eklund 17B / Type B)).